Here is a 555-residue protein sequence, read N- to C-terminus: Chaperonin GroEL 2 (555 aa).

ATP-binding positions include 29 to 32 (TLGP), 86 to 90 (DGTTT), glycine 414, 480 to 482 (NAL), and aspartate 496.

The protein belongs to the chaperonin (HSP60) family. In terms of assembly, forms a cylinder of 14 subunits composed of two heptameric rings stacked back-to-back. Interacts with the co-chaperonin GroES.

The protein resides in the cytoplasm. The catalysed reaction is ATP + H2O + a folded polypeptide = ADP + phosphate + an unfolded polypeptide.. Together with its co-chaperonin GroES, plays an essential role in assisting protein folding. The GroEL-GroES system forms a nano-cage that allows encapsulation of the non-native substrate proteins and provides a physical environment optimized to promote and accelerate protein folding. The chain is Chaperonin GroEL 2 from Synechococcus sp. (strain ATCC 27144 / PCC 6301 / SAUG 1402/1) (Anacystis nidulans).